Here is a 93-residue protein sequence, read N- to C-terminus: YcgL domain-containing protein Spea_2443 (93 aa).

A YcgL domain is found at 1–85 (MICAVYKSLR…PVVNLLEQHK (85 aa)).

The protein is YcgL domain-containing protein Spea_2443 of Shewanella pealeana (strain ATCC 700345 / ANG-SQ1).